Here is a 190-residue protein sequence, read N- to C-terminus: GTP cyclohydrolase 1 (190 aa).

Residues Cys-80, His-83, and Cys-151 each contribute to the Zn(2+) site.

Belongs to the GTP cyclohydrolase I family. Toroid-shaped homodecamer, composed of two pentamers of five dimers.

It carries out the reaction GTP + H2O = 7,8-dihydroneopterin 3'-triphosphate + formate + H(+). Its pathway is cofactor biosynthesis; 7,8-dihydroneopterin triphosphate biosynthesis; 7,8-dihydroneopterin triphosphate from GTP: step 1/1. In Rickettsia akari (strain Hartford), this protein is GTP cyclohydrolase 1.